We begin with the raw amino-acid sequence, 259 residues long: Protein unc-50 homolog B (259 aa).

Polar residues predominate over residues 1 to 11 (MLPTTSVSPRS). A disordered region spans residues 1–21 (MLPTTSVSPRSPDNGILSPRD). Over 1–82 (MLPTTSVSPR…TKDQWARDDP (82 aa)) the chain is Cytoplasmic. A helical transmembrane segment spans residues 83 to 103 (AFLVLLGIWLCVSTVGFGFVL). Residues 104–109 (DMSFFE) lie on the Lumenal side of the membrane. The chain crosses the membrane as a helical span at residues 110-130 (TFTLLLWVVFIDCVGVGLLIA). Residues 131–158 (TSMWFVSNKYMVNRQGKDYDVEWGYTFD) are Cytoplasmic-facing. Residues 159–179 (VHLNAFYPLLVILHFIQLFFI) traverse the membrane as a helical segment. The Lumenal portion of the chain corresponds to 180-181 (NH). The helical transmembrane segment at 182–202 (VILTGWFIGCFVGNTLWLIAI) threads the bilayer. Residues 203-222 (GYYIYITFLGYSALPFLKNT) are Cytoplasmic-facing. A helical transmembrane segment spans residues 223-243 (VVLLYPFAALALLYILSLALG). Topologically, residues 244–259 (WNFTAKLCLFYKYRVR) are lumenal.

The protein belongs to the unc-50 family.

It localises to the nucleus inner membrane. The protein localises to the golgi apparatus membrane. Involved in the cell surface expression of neuronal nicotinic receptors. Binds RNA. The chain is Protein unc-50 homolog B (unc50-b) from Xenopus laevis (African clawed frog).